The sequence spans 332 residues: tRNA dimethylallyltransferase (332 aa).

14–21 (GPTASGKT) contacts ATP. 16–21 (TASGKT) contributes to the substrate binding site. The tract at residues 39-42 (DSMQ) is interaction with substrate tRNA. The segment at 313-332 (KRSSKHDCKPQHPRSSTREL) is disordered. A compositionally biased stretch (basic and acidic residues) spans 317-332 (KHDCKPQHPRSSTREL).

This sequence belongs to the IPP transferase family. In terms of assembly, monomer. Requires Mg(2+) as cofactor.

The enzyme catalyses adenosine(37) in tRNA + dimethylallyl diphosphate = N(6)-dimethylallyladenosine(37) in tRNA + diphosphate. Catalyzes the transfer of a dimethylallyl group onto the adenine at position 37 in tRNAs that read codons beginning with uridine, leading to the formation of N6-(dimethylallyl)adenosine (i(6)A). The sequence is that of tRNA dimethylallyltransferase from Staphylococcus haemolyticus (strain JCSC1435).